We begin with the raw amino-acid sequence, 852 residues long: MMMVHSMSRDMMNRESPDKGLDSGKYVRYTPEQVEALERVYTECPKPSSLRRQQLIRECPILSNIEPKQIKVWFQNRRCREKQRKEAARLQTVNRKLNAMNKLLMEENDRLQKQVSNLVYENGHMKHQLHTASGTTTDNSCESVVVSGQQHQQQNPNPQHQQRDANNPAGLLSIAEEALAEFLSKATGTAVDWVQMIGMKPGPDSIGIVAISRNCSGIAARACGLVSLEPMKVAEILKDRPSWLRDCRSVDTLSVIPAGNGGTIELIYTQMYAPTTLAAARDFWTLRYSTCLEDGSYVVCERSLTSATGGPTGPPSSNFVRAEMKPSGFLIRPCDGGGSILHIVDHVDLDAWSVPEVMRPLYESSKILAQKMTVAALRHVRQIAQETSGEVQYGGGRQPAVLRTFSQRLCRGFNDAVNGFVDDGWSPMGSDGAEDVTVMINLSPGKFGGSQYGNSFLPSFGSGVLCAKASMLLQNVPPAVLVRFLREHRSEWADYGVDAYAAASLRASPFAVPCARAGGFPSNQVILPLAQTVEHEESLEVVRLEGHAYSPEDMGLARDMYLLQLCSGVDENVVGGCAQLVFAPIDESFADDAPLLPSGFRIIPLEQKSTPNGASANRTLDLASALEGSTRQAGEADPNGCNFRSVLTIAFQFTFDNHSRDSVASMARQYVRSIVGSIQRVALAIAPRPGSNISPISVPTSPEALTLVRWISRSYSLHTGADLFGSDSQTSGDTLLHQLWNHSDAILCCSLKTNASPVFTFANQTGLDMLETTLVALQDIMLDKTLDEPGRKALCSEFPKIMQQGYAHLPAGVCASSMGRMVSYEQATVWKVLEDDESNHCLAFMFVNWSFV.

Positions 1–25 (MMMVHSMSRDMMNRESPDKGLDSGK) are disordered. Positions 7–22 (MSRDMMNRESPDKGLD) are enriched in basic and acidic residues. The homeobox DNA-binding region spans 22–85 (DSGKYVRYTP…NRRCREKQRK (64 aa)). Residues 80–122 (REKQRKEAARLQTVNRKLNAMNKLLMEENDRLQKQVSNLVYEN) adopt a coiled-coil conformation. A ZIP domain region spans residues 80–130 (REKQRKEAARLQTVNRKLNAMNKLLMEENDRLQKQVSNLVYENGHMKHQLH). Polar residues predominate over residues 130–148 (HTASGTTTDNSCESVVVSG). Residues 130 to 166 (HTASGTTTDNSCESVVVSGQQHQQQNPNPQHQQRDAN) are disordered. Residues 149-160 (QQHQQQNPNPQH) show a composition bias toward low complexity. The START domain occupies 164 to 392 (DANNPAGLLS…IAQETSGEVQ (229 aa)).

This sequence belongs to the HD-ZIP homeobox family. Class III subfamily. In terms of assembly, homodimer. Heterodimer with ZPR3. Interacts with ESR1 and ESR2. Interacts with ZPR3. In terms of tissue distribution, expressed in the center of the meristem and on the adaxial side of the leaves.

Its subcellular location is the nucleus. Its activity is regulated as follows. Inhibited by ZPR3. Functionally, probable transcription factor involved in the determination of adaxial-abaxial polarity in ovule primordium. Specifies adaxial leaf fates. In Arabidopsis thaliana (Mouse-ear cress), this protein is Homeobox-leucine zipper protein ATHB-14 (ATHB-14).